The following is a 154-amino-acid chain: Endoribonuclease YbeY (154 aa).

Residues histidine 114, histidine 118, and histidine 124 each coordinate Zn(2+).

Belongs to the endoribonuclease YbeY family. It depends on Zn(2+) as a cofactor.

It is found in the cytoplasm. Single strand-specific metallo-endoribonuclease involved in late-stage 70S ribosome quality control and in maturation of the 3' terminus of the 16S rRNA. The polypeptide is Endoribonuclease YbeY (Haemophilus influenzae (strain PittEE)).